A 310-amino-acid chain; its full sequence is MSRPIIIDCDPGHDDAIALILACASPELDIKAVTTSAGNQTPEKTLHNALRILTLVGRTDIPVAGGALQPLSRELIIADNVHGETGLDGPVLPEPAFEPQPCHAVELMAKILTEATEPVTLVPTGPLTNIALLLATHRELHSQIDSIVLMGGSAEAGNWTPAAEFNIYVDPEAADIVFKSGIPITMCGLDVTHRAQIMDEDIEKIRKINNPVAQVTAELLDFFMIYHRDPKWGFEGAPLHDPCTIAWLLEPELFASINCWVGIETQGSHTLGMTVVDRYQLTDNPINTTVLFDVNRQGFVDLLAERLANY.

The active site involves His-240.

It belongs to the IUNH family. RihA subfamily.

In terms of biological role, hydrolyzes cytidine or uridine to ribose and cytosine or uracil, respectively. The protein is Pyrimidine-specific ribonucleoside hydrolase RihA of Photobacterium profundum (strain SS9).